A 247-amino-acid polypeptide reads, in one-letter code: Spermatogenesis-associated protein 46 (247 aa).

The segment at 125 to 164 is disordered; it reads QRDSCLPEDTADSVCSSSPSPENTCPREATKKSRPGPDTT. The span at 137-147 shows a compositional bias: polar residues; sequence SVCSSSPSPEN.

It is found in the nucleus membrane. Its function is as follows. Plays a role in spermiogenesis and fertilization. This chain is Spermatogenesis-associated protein 46 (SPATA46), found in Bos taurus (Bovine).